The sequence spans 1117 residues: Isoleucine--tRNA ligase (1117 aa).

The 'HIGH' region motif lies at 64-74 (PFANGLPHYGH). The 'KMSKS' region signature appears at 647-651 (KLSKR). Residue lysine 650 coordinates ATP.

This sequence belongs to the class-I aminoacyl-tRNA synthetase family. IleS type 2 subfamily. As to quaternary structure, monomer. It depends on Zn(2+) as a cofactor.

It is found in the cytoplasm. It catalyses the reaction tRNA(Ile) + L-isoleucine + ATP = L-isoleucyl-tRNA(Ile) + AMP + diphosphate. Catalyzes the attachment of isoleucine to tRNA(Ile). As IleRS can inadvertently accommodate and process structurally similar amino acids such as valine, to avoid such errors it has two additional distinct tRNA(Ile)-dependent editing activities. One activity is designated as 'pretransfer' editing and involves the hydrolysis of activated Val-AMP. The other activity is designated 'posttransfer' editing and involves deacylation of mischarged Val-tRNA(Ile). This chain is Isoleucine--tRNA ligase, found in Ehrlichia ruminantium (strain Welgevonden).